The sequence spans 1187 residues: Roquin-2 (1187 aa).

Zn(2+) is bound by residues cysteine 14, cysteine 17, cysteine 33, histidine 35, cysteine 38, cysteine 50, and aspartate 53. Residues 14–54 form an RING-type; degenerate zinc finger; it reads CPICYNEFDENVHKPISLGCSHTVCKTCLNKLHRKACPFDQ. The segment at 91–170 is HEPN-N; the sequence is ENKHYEVAKK…RTVTELILQH (80 aa). Residues 171–325 are ROQ; it reads QNPQQLSANL…SIIDKLQSPE (155 aa). Residues 326-396 are HEPN-C; the sequence is SFAKSVQELT…GLVDFIQNYS (71 aa). Residues 410–438 form a C3H1-type zinc finger; the sequence is KYKTSMCRDLRQQGGCPRGTNCTFAHSQE. 2 disordered regions span residues 527-571 and 640-677; these read VGTN…GTEL and NVPESSLPPASMPYADHYSTFSPRDRMNSSPYQPPPPQ. Polar residues predominate over residues 529-545; that stretch reads TNAQNAGPSAESVSENK. Phosphoserine is present on serine 548. Positions 553-571 are enriched in polar residues; that stretch reads PVSNAAATSAGPSNFGTEL. Serine 806, serine 981, and serine 1115 each carry phosphoserine.

As to quaternary structure, interacts with EDC4. Interacts with CCR4-NOT deadenylase complex. Interacts with MAP3K5; the interaction is probably stimulus-dependent. Post-translationally, proteolytically cleaved by MALT1 in activated CD4(+) T cells; cleavage at Arg-509 is critical for promoting RC3H1 degradation in response to T-cell receptor (TCR) stimulation, and hence is necessary for prolonging the stability of a set of mRNAs controlling Th17 cell differentiation. Highest levels in lymph node and thymus and slightly lesser amounts in brain, lung, and spleen (at protein level). Very weak expression in heart, muscle, and kidney (at protein level). Expressed in CD4(+) helper T-cells (at protein level).

Its subcellular location is the cytoplasm. It localises to the P-body. The enzyme catalyses S-ubiquitinyl-[E2 ubiquitin-conjugating enzyme]-L-cysteine + [acceptor protein]-L-lysine = [E2 ubiquitin-conjugating enzyme]-L-cysteine + N(6)-ubiquitinyl-[acceptor protein]-L-lysine.. It participates in protein modification; protein ubiquitination. Its activity is regulated as follows. Binding to dsRNA, but not CDE RNA, crosstalks with the E3 ubiquitin ligase activity and may inhibit ubiquitination. In terms of biological role, post-transcriptional repressor of mRNAs containing a conserved stem loop motif, called constitutive decay element (CDE), which is often located in the 3'-UTR, as in HMGXB3, ICOS, IER3, NFKBID, NFKBIZ, PPP1R10, TNF and in many more mRNAs. Binds to CDE and promotes mRNA deadenylation and degradation. This process does not involve miRNAs. In follicular helper T (Tfh) cells, represses of ICOS and TNFRSF4 expression, thus preventing spontaneous Tfh cell differentiation, germinal center B-cell differentiation in the absence of immunization and autoimmunity. In resting or LPS-stimulated macrophages, controls inflammation by suppressing TNF expression. Also recognizes CDE in its own mRNA and in that of paralogous RC3H1, possibly leading to feedback loop regulation. Inhibits cooperatively with ZC3H12A the differentiation of helper T cells Th17 in lungs. They repress target mRNA encoding the Th17 cell-promoting factors IL6, ICOS, REL, IRF4, NFKBID and NFKBIZ. The cooperation requires RNA-binding by RC3H1 and the nuclease activity of ZC3H12A. miRNA-binding protein that regulates microRNA homeostasis. Enhances DICER-mediated processing of pre-MIR146a but reduces mature MIR146a levels through an increase of 3' end uridylation. Both inhibits ICOS mRNA expression and they may act together to exert the suppression. Acts as a ubiquitin E3 ligase. Pairs with E2 enzymes UBE2B, UBE2D2, UBE2E2, UBE2E3, UBE2G2, UBE2K and UBE2Q2 and produces polyubiquitin chains. Shows the strongest activity when paired with UBE2N:UBE2V1 or UBE2N:UBE2V2 E2 complexes and generate both short and long polyubiquitin chains. Involved in the ubiquitination of MAP3K5. Able to interact with double-stranded RNA (dsRNA). The chain is Roquin-2 (Rc3h2) from Mus musculus (Mouse).